Consider the following 1045-residue polypeptide: Fibrosin-1-like protein (1045 aa).

Over residues 1 to 12 (MEAKVRPSRRSR) the composition is skewed to basic residues. Disordered stretches follow at residues 1 to 86 (MEAK…DGFA) and 99 to 315 (DMAL…THVP). Over residues 13-28 (AQRDRGRRREAARDAR) the composition is skewed to basic and acidic residues. A compositionally biased stretch (low complexity) spans 48–63 (GLRGAPPRGAAPAPRT). Residues 99 to 123 (DMALKPHERKEKWERRLIKKPRESE) show a composition bias toward basic and acidic residues. Residues 183–197 (EATSSRDPLSDSSAH) show a composition bias toward polar residues. Residues 270–280 (HAAPCPGPPPG) are compositionally biased toward pro residues. Position 340 is a phosphoserine (Ser-340). Positions 443–457 (QHTHQHTHQHTHQHQ) are enriched in basic residues. Disordered regions lie at residues 443–462 (QHTHQHTHQHTHQHQHTFAP) and 719–753 (EGSSVHGLPSPHEAWNRLHRAPPSFPAPPPWPKSV). A compositionally biased stretch (pro residues) spans 741–750 (PSFPAPPPWP). Phosphoserine is present on Ser-790. 2 disordered regions span residues 809–880 (ELGR…APLQ) and 910–961 (AAAP…PALD). The span at 817-837 (AEREAEPRVKESRSPAKEEAA) shows a compositional bias: basic and acidic residues. Lys-858 participates in a covalent cross-link: Glycyl lysine isopeptide (Lys-Gly) (interchain with G-Cter in SUMO2). A compositionally biased stretch (low complexity) spans 910-922 (AAAPAPGSAALLE). Residues 923–949 (PPERPYRDREPHGYSPERLRGELERAR) are compositionally biased toward basic and acidic residues. Residues Ser-937 and Ser-977 each carry the phosphoserine modification. Phosphothreonine occurs at positions 989 and 1010. A disordered region spans residues 991–1045 (PAAAALGAPPPLVTAAGPPTPPGPPRSRTTPLGGLGPGEARDYSPSRNPPEVEAR). A compositionally biased stretch (pro residues) spans 998–1015 (APPPLVTAAGPPTPPGPP). The span at 1029–1045 (EARDYSPSRNPPEVEAR) shows a compositional bias: basic and acidic residues.

This sequence belongs to the AUTS2 family.

The chain is Fibrosin-1-like protein (FBRSL1) from Homo sapiens (Human).